The primary structure comprises 122 residues: MPTTNQLVRKERKRQTKKTATPALQGSPQRRGVCTRVSTTTPKKPNSALRKIARVRLTNGHEVTAYVPGEGHNLQEHSVVLVRGGRVKDLPGVRYKVVRGALDALGVEGRKQGRSKYGTKKS.

Residues 1 to 45 (MPTTNQLVRKERKRQTKKTATPALQGSPQRRGVCTRVSTTTPKKP) are disordered. Positions 18 to 28 (KTATPALQGSP) are enriched in polar residues. Residue Asp-89 is modified to 3-methylthioaspartic acid.

The protein belongs to the universal ribosomal protein uS12 family. As to quaternary structure, part of the 30S ribosomal subunit. Contacts proteins S8 and S17. May interact with IF1 in the 30S initiation complex.

Functionally, with S4 and S5 plays an important role in translational accuracy. Its function is as follows. Interacts with and stabilizes bases of the 16S rRNA that are involved in tRNA selection in the A site and with the mRNA backbone. Located at the interface of the 30S and 50S subunits, it traverses the body of the 30S subunit contacting proteins on the other side and probably holding the rRNA structure together. The combined cluster of proteins S8, S12 and S17 appears to hold together the shoulder and platform of the 30S subunit. The polypeptide is Small ribosomal subunit protein uS12 (Rubrobacter xylanophilus (strain DSM 9941 / JCM 11954 / NBRC 16129 / PRD-1)).